A 74-amino-acid polypeptide reads, in one-letter code: MKRQKRDQTERAFVKGYQAGIEGRSKSLCPHESGLARQQWLNGWRESRMDQWDGYSRLAQVQKITNLHPMSMSG.

It belongs to the ribosome modulation factor family.

The protein resides in the cytoplasm. In terms of biological role, during stationary phase, converts 70S ribosomes to an inactive dimeric form (100S ribosomes). This is Ribosome modulation factor from Cellvibrio japonicus (strain Ueda107) (Pseudomonas fluorescens subsp. cellulosa).